A 111-amino-acid chain; its full sequence is uncharacterized protein (111 aa).

The HIT domain occupies 8–111 (LFLKIIKREE…HVHIIPYYKK (104 aa)). Positions 100-104 (HTHVH) match the Histidine triad motif motif.

This is an uncharacterized protein from Mesomycoplasma hyorhinis (Mycoplasma hyorhinis).